The primary structure comprises 74 residues: Kappa-scoloptoxin(07)-Ssm2a (74 aa).

The N-terminal stretch at 1–19 (MLVFYALLFVTVFSNTVMG) is a signal peptide. The propeptide occupies 20–41 (ATIDKPIPKPILREAIEEIEVN).

The protein belongs to the scoloptoxin-07 family. Contains 3 disulfide bonds. As to expression, expressed by the venom gland.

The protein resides in the secreted. Its function is as follows. Toxin that inhibits voltage-gated potassium channel currents in DRG neurons (IC(50)=about 570 nM). In vivo, induces neurotoxicity shown by twitching, paralysis, and body contraction. In vivo, insects injected with this toxin showed signs of neurotoxicity including twitching, paralysis, and body contraction. The sequence is that of Kappa-scoloptoxin(07)-Ssm2a from Scolopendra mutilans (Chinese red-headed centipede).